A 154-amino-acid chain; its full sequence is Large ribosomal subunit protein uL30 (154 aa).

This sequence belongs to the universal ribosomal protein uL30 family. As to quaternary structure, part of the 50S ribosomal subunit.

The polypeptide is Large ribosomal subunit protein uL30 (Methanococcus maripaludis (strain C5 / ATCC BAA-1333)).